Here is a 591-residue protein sequence, read N- to C-terminus: Aspartate--tRNA ligase (591 aa).

E173 is an L-aspartate binding site. The interval 197 to 200 (QLFK) is aspartate. R219 lines the L-aspartate pocket. Residues 219–221 (RDE) and Q228 contribute to the ATP site. Residue H448 coordinates L-aspartate. Residue E482 participates in ATP binding. Position 489 (R489) interacts with L-aspartate. Residue 534–537 (GLDR) coordinates ATP.

It belongs to the class-II aminoacyl-tRNA synthetase family. Type 1 subfamily. As to quaternary structure, homodimer.

It is found in the cytoplasm. The catalysed reaction is tRNA(Asp) + L-aspartate + ATP = L-aspartyl-tRNA(Asp) + AMP + diphosphate. In terms of biological role, catalyzes the attachment of L-aspartate to tRNA(Asp) in a two-step reaction: L-aspartate is first activated by ATP to form Asp-AMP and then transferred to the acceptor end of tRNA(Asp). This Shewanella sp. (strain MR-4) protein is Aspartate--tRNA ligase.